A 170-amino-acid chain; its full sequence is Regulator of ribonuclease activity A (170 aa).

Belongs to the RraA family. Homotrimer. Binds to both RNA-binding sites in the C-terminal region of Rne and to RhlB.

The protein localises to the cytoplasm. In terms of biological role, globally modulates RNA abundance by binding to RNase E (Rne) and regulating its endonucleolytic activity. Can modulate Rne action in a substrate-dependent manner by altering the composition of the degradosome. Modulates RNA-binding and helicase activities of the degradosome. In Psychromonas ingrahamii (strain DSM 17664 / CCUG 51855 / 37), this protein is Regulator of ribonuclease activity A.